Here is a 426-residue protein sequence, read N- to C-terminus: Actin-like protein 6B (426 aa).

Positions 39 to 82 (TTVGLLAAEEGGGLELEGEKEKKGKIFHIDTNALHVPRDGAEVM) are essential for mediating its function in dendritic development; may contribute to neuronal-specific targeting.

It belongs to the actin family. Component of the multiprotein chromatin-remodeling complexes SWI/SNF: SWI/SNF-A (BAF), SWI/SNF-B (PBAF) and related complexes. The canonical complex contains a catalytic subunit (either SMARCA4/BRG1/BAF190A or SMARCA2/BRM/BAF190B) and at least SMARCE1, ACTL6A/BAF53, SMARCC1/BAF155, SMARCC2/BAF170, and SMARCB1/SNF5/BAF47. Other subunits specific to each of the complexes may also be present permitting several possible combinations developmentally and tissue specific. Component of the BAF complex, which includes at least actin (ACTB), ARID1A/BAF250A, ARID1B/BAF250B, SMARCA2/BRM, SMARCA4/BRG1/BAF190A, ACTL6A/BAF53, ACTL6B/BAF53B, SMARCE1/BAF57, SMARCC1/BAF155, SMARCC2/BAF170, SMARCB1/SNF5/INI1, and one or more SMARCD1/BAF60A, SMARCD2/BAF60B, or SMARCD3/BAF60C. Component of neuron-specific chromatin remodeling complex (nBAF complex) composed of at least, ARID1A/BAF250A or ARID1B/BAF250B, SMARCD1/BAF60A or SMARCD2/BAF60B or SMARCD3/BAF60C, SMARCA2/BRM/BAF190B, SMARCA4/BRG1/BAF190A, SMARCB1/BAF47, SMARCC1/BAF155, SMARCE1/BAF57, SMARCC2/BAF170, DPF1/BAF45B, DPF3/BAF45C, ACTL6B/BAF53B and actin (ACTB). Note that the nBAF complex is polymorphic in regard to the ATPase, SMARCA2 and SMARCA4 occupying mutually exclusive positions. May be a component of the SWI/SNF-B (PBAF) chromatin remodeling complex, at least composed of SMARCA4/BRG1, SMARCB1/BAF47/SNF5, ACTL6A/BAF53A or ACTL6B/BAF53B, SMARCE1/BAF57, SMARCD1/BAF60A, SMARCD2/BAF60B, perhaps SMARCD3/BAF60C, SMARCC1/BAF155, SMARCC2/BAF170, PBRM1/BAF180, ARID2/BAF200 and actin.

Its subcellular location is the nucleus. Its function is as follows. Involved in transcriptional activation and repression of select genes by chromatin remodeling (alteration of DNA-nucleosome topology). Component of SWI/SNF chromatin remodeling complexes that carry out key enzymatic activities, changing chromatin structure by altering DNA-histone contacts within a nucleosome in an ATP-dependent manner. Belongs to the neuron-specific chromatin remodeling complex (nBAF complex), as such plays a role in remodeling mononucleosomes in an ATP-dependent fashion, and is required for postmitotic neural development and dendritic outgrowth. During neural development a switch from a stem/progenitor to a postmitotic chromatin remodeling mechanism occurs as neurons exit the cell cycle and become committed to their adult state. The transition from proliferating neural stem/progenitor cells to postmitotic neurons requires a switch in subunit composition of the npBAF and nBAF complexes. As neural progenitors exit mitosis and differentiate into neurons, npBAF complexes which contain ACTL6A/BAF53A and PHF10/BAF45A, are exchanged for homologous alternative ACTL6B/BAF53B and DPF1/BAF45B or DPF3/BAF45C subunits in neuron-specific complexes (nBAF). The npBAF complex is essential for the self-renewal/proliferative capacity of the multipotent neural stem cells. The nBAF complex along with CREST plays a role regulating the activity of genes essential for dendrite growth. ACTL6B/BAF53B is not essential for assembly of the nBAF complex but is required for targeting the complex and CREST to the promoter of genes essential for dendritic growth. Essential for neuronal maturation and dendrite development. The protein is Actin-like protein 6B (ACTL6B) of Bos taurus (Bovine).